We begin with the raw amino-acid sequence, 264 residues long: Myozenin-2 (264 aa).

Arg-53 carries the omega-N-methylarginine modification. Residues 98-134 form a disordered region; that stretch reads ESGSQQAPFTPPNTPDPRSPPNPENIAPGYSGPLKEI. Ser-101 carries the post-translational modification Phosphoserine. Over residues 106-120 the composition is skewed to pro residues; the sequence is FTPPNTPDPRSPPNP. 2 positions are modified to phosphothreonine: Thr-107 and Thr-111. Phosphoserine is present on Ser-116.

It belongs to the myozenin family. As to quaternary structure, interacts via its C-terminus with spectrin repeats 3 and 4 of ACTN2. Interacts with ACTN1, LDB3, MYOT and PPP3CA.

It is found in the cytoplasm. The protein localises to the myofibril. Its subcellular location is the sarcomere. The protein resides in the z line. Its function is as follows. Myozenins may serve as intracellular binding proteins involved in linking Z line proteins such as alpha-actinin, gamma-filamin, TCAP/telethonin, LDB3/ZASP and localizing calcineurin signaling to the sarcomere. Plays an important role in the modulation of calcineurin signaling. May play a role in myofibrillogenesis. The sequence is that of Myozenin-2 (MYOZ2) from Bos taurus (Bovine).